We begin with the raw amino-acid sequence, 206 residues long: Small ribosomal subunit protein uS4 (206 aa).

Residues 96–156 (GRLDNVVYRM…EKSKKQARIK (61 aa)) form the S4 RNA-binding domain.

It belongs to the universal ribosomal protein uS4 family. As to quaternary structure, part of the 30S ribosomal subunit. Contacts protein S5. The interaction surface between S4 and S5 is involved in control of translational fidelity.

Functionally, one of the primary rRNA binding proteins, it binds directly to 16S rRNA where it nucleates assembly of the body of the 30S subunit. Its function is as follows. With S5 and S12 plays an important role in translational accuracy. This chain is Small ribosomal subunit protein uS4, found in Haemophilus influenzae (strain 86-028NP).